The following is a 377-amino-acid chain: Bacterial actin-related protein (377 aa).

It belongs to the actin family.

In terms of biological role, may be a dominant-negative inhibitor of eukaryotic actin polymerization. This is Bacterial actin-related protein (barP) from Haliangium ochraceum (strain DSM 14365 / JCM 11303 / SMP-2).